A 111-amino-acid chain; its full sequence is Cornifelin (111 aa).

This sequence belongs to the cornifelin family. In terms of assembly, directly or indirectly cross-linked to CE proteins loricin and involucrin (IVL).

It is found in the cytoplasm. In terms of biological role, part of the insoluble cornified cell envelope (CE) of stratified squamous epithelia. This chain is Cornifelin (CNFN), found in Bos taurus (Bovine).